The following is a 235-amino-acid chain: Lipoprotein-releasing system ATP-binding protein LolD (235 aa).

The region spanning 7 to 234 is the ABC transporter domain; that stretch reads LQCTNLSKRY…QQELTLMGAR (228 aa). 43–50 is a binding site for ATP; that stretch reads GSSGSGKS.

The protein belongs to the ABC transporter superfamily. Lipoprotein translocase (TC 3.A.1.125) family. The complex is composed of two ATP-binding proteins (LolD) and two transmembrane proteins (LolC and LolE).

Its subcellular location is the cell inner membrane. In terms of biological role, part of the ABC transporter complex LolCDE involved in the translocation of mature outer membrane-directed lipoproteins, from the inner membrane to the periplasmic chaperone, LolA. Responsible for the formation of the LolA-lipoprotein complex in an ATP-dependent manner. The chain is Lipoprotein-releasing system ATP-binding protein LolD from Pectobacterium atrosepticum (strain SCRI 1043 / ATCC BAA-672) (Erwinia carotovora subsp. atroseptica).